Reading from the N-terminus, the 215-residue chain is Cytochrome b6 (215 aa).

A helical transmembrane segment spans residues 32-52; sequence IFYCLGGITFTCFLLQVASGF. Residue C35 coordinates heme c. The heme b site is built by H86 and H100. 3 helical membrane-spanning segments follow: residues 90–110, 116–136, and 186–206; these read ASMM…TGGF, LTWV…VTGY, and LHTF…FLMI. Heme b is bound by residues H187 and H202.

This sequence belongs to the cytochrome b family. PetB subfamily. As to quaternary structure, the 4 large subunits of the cytochrome b6-f complex are cytochrome b6, subunit IV (17 kDa polypeptide, PetD), cytochrome f and the Rieske protein, while the 4 small subunits are PetG, PetL, PetM and PetN. The complex functions as a dimer. Heme b serves as cofactor. Heme c is required as a cofactor.

Its subcellular location is the plastid. The protein resides in the chloroplast thylakoid membrane. In terms of biological role, component of the cytochrome b6-f complex, which mediates electron transfer between photosystem II (PSII) and photosystem I (PSI), cyclic electron flow around PSI, and state transitions. In Coleochaete orbicularis (Charophycean green alga), this protein is Cytochrome b6.